The sequence spans 474 residues: Probable periplasmic serine endoprotease DegP-like (474 aa).

An N-terminal signal peptide occupies residues 1–25; sequence MRNLKSVTPLLMAALLWGQSLLAQA. Active-site charge relay system residues include histidine 113, aspartate 143, and serine 216. Substrate is bound by residues 214 to 216 and 271 to 275; these read GNS and LGVVI. 2 consecutive PDZ domains span residues 260–351 and 357–463; these read LKAD…VRDG and KVTI…LRQG.

The protein belongs to the peptidase S1C family.

It is found in the periplasm. It carries out the reaction Acts on substrates that are at least partially unfolded. The cleavage site P1 residue is normally between a pair of hydrophobic residues, such as Val-|-Val.. Its function is as follows. Might be efficient in the degradation of transiently denatured and unfolded proteins which accumulate in the periplasm following stress conditions. The polypeptide is Probable periplasmic serine endoprotease DegP-like (Ectopseudomonas mendocina (strain ymp) (Pseudomonas mendocina)).